The primary structure comprises 558 residues: Proline--tRNA ligase (558 aa).

Belongs to the class-II aminoacyl-tRNA synthetase family. ProS type 1 subfamily. Homodimer.

The protein localises to the cytoplasm. It catalyses the reaction tRNA(Pro) + L-proline + ATP = L-prolyl-tRNA(Pro) + AMP + diphosphate. In terms of biological role, catalyzes the attachment of proline to tRNA(Pro) in a two-step reaction: proline is first activated by ATP to form Pro-AMP and then transferred to the acceptor end of tRNA(Pro). As ProRS can inadvertently accommodate and process non-cognate amino acids such as alanine and cysteine, to avoid such errors it has two additional distinct editing activities against alanine. One activity is designated as 'pretransfer' editing and involves the tRNA(Pro)-independent hydrolysis of activated Ala-AMP. The other activity is designated 'posttransfer' editing and involves deacylation of mischarged Ala-tRNA(Pro). The misacylated Cys-tRNA(Pro) is not edited by ProRS. This is Proline--tRNA ligase from Coprothermobacter proteolyticus (strain ATCC 35245 / DSM 5265 / OCM 4 / BT).